The chain runs to 250 residues: Nuclear transcription factor Y subunit C-4 (250 aa).

The tract at residues 219 to 250 is disordered; the sequence is GIAYGGQQGHPGYLWQDPQEQQEEPPAEQQSD. Acidic residues predominate over residues 238-250; that stretch reads EQQEEPPAEQQSD.

It belongs to the NFYC/HAP5 subunit family. Heterotrimeric transcription factor composed of three components, NF-YA, NF-YB and NF-YC. NF-YB and NF-YC must interact and dimerize for NF-YA association and DNA binding. Interacts with NFYB2. Interacts with NFYB8, NFYB10 and HD5/NFYB11.

It is found in the nucleus. The protein localises to the cytoplasm. Probable transcription factor involved in the regulation of flowering time under long day (LD) conditions. Functions as a repressor of flowering, independently of HD1 and GHD7. Controls flowering time by negatively regulating the expression of EHD1 and HD3A. Component of the NF-Y/HAP transcription factor complex. In Oryza sativa subsp. japonica (Rice), this protein is Nuclear transcription factor Y subunit C-4.